The following is a 335-amino-acid chain: tRNA-splicing endonuclease (335 aa).

Residues tyrosine 269, histidine 280, and lysine 311 contribute to the active site.

It belongs to the tRNA-intron endonuclease family. Archaeal long subfamily. As to quaternary structure, homodimer.

The enzyme catalyses pretRNA = a 3'-half-tRNA molecule with a 5'-OH end + a 5'-half-tRNA molecule with a 2',3'-cyclic phosphate end + an intron with a 2',3'-cyclic phosphate and a 5'-hydroxyl terminus.. Its function is as follows. Endonuclease that removes tRNA introns. Cleaves pre-tRNA at the 5'- and 3'-splice sites to release the intron. The products are an intron and two tRNA half-molecules bearing 2',3' cyclic phosphate and 5'-OH termini. Recognizes a pseudosymmetric substrate in which 2 bulged loops of 3 bases are separated by a stem of 4 bp. The protein is tRNA-splicing endonuclease of Haloarcula marismortui (strain ATCC 43049 / DSM 3752 / JCM 8966 / VKM B-1809) (Halobacterium marismortui).